A 160-amino-acid polypeptide reads, in one-letter code: Putative pre-16S rRNA nuclease (160 aa).

Belongs to the YqgF nuclease family.

It is found in the cytoplasm. Its function is as follows. Could be a nuclease involved in processing of the 5'-end of pre-16S rRNA. The polypeptide is Putative pre-16S rRNA nuclease (Chelativorans sp. (strain BNC1)).